Consider the following 1254-residue polypeptide: Structural polyprotein (1254 aa).

The interval 1 to 33 (MFPFQPMYPMQPMPYRNPFAAPRRPWFPRTDPF) is necessary for nucleocapsid assembly and virus assembly. Residues 33 to 68 (FLAMQVQELTRSMANLTFKQRRGAPPEGPPAKKSKR) are host transcription inhibition. Residues 41–48 (LTRSMANL) carry the Supraphysiological nuclear export signal motif. Residue N47 is glycosylated (N-linked (GlcNAc...) asparagine; by host). The segment at 48-118 (LTFKQRRGAP…KKPGKRQRMV (71 aa)) is disordered. Residues 64 to 68 (KKSKR) carry the Nuclear localization signal motif. The segment covering 76–91 (GGQRKKKKNEGKKKAK) has biased composition (basic residues). The binding to the viral RNA stretch occupies residues 90–126 (AKTGPPNLKTQNGNKKKTNKKPGKRQRMVMKLESDKT). T92 and T107 each carry phosphothreonine. Over residues 103–117 (NKKKTNKKPGKRQRM) the composition is skewed to basic residues. Residues 111 to 125 (PGKRQRMVMKLESDK) form a ribosome-binding region. Phosphoserine is present on S123. In terms of domain architecture, Peptidase S3 spans 125–274 (KTFPIMLEGK…KYTPENCEQW (150 aa)). T126 is subject to Phosphothreonine. H151 (charge relay system) is an active-site residue. Residues 167 to 172 (KKASKY) form an interaction with spike glycoprotein E2 region. Residues D173 and S225 each act as charge relay system in the active site. The tract at residues 259-263 (EKGVT) is interaction with spike glycoprotein E2. Positions 275 to 286 (SLVTTMCLLANV) are functions as an uncleaved signal peptide for the precursor of protein E3/E2. Residues 275–702 (SLVTTMCLLA…YHRYPMSTIT (428 aa)) are Extracellular-facing. 7 disulfides stabilise this stretch: C281–C290, C352–C456, C355–C360, C423–C437, C484–C599, C533–C559, and C535–C553. N285 is a glycosylation site (N-linked (GlcNAc...) asparagine; by host). Residues N545 and N651 are each glycosylated (N-linked (GlcNAc...) asparagine; by host). A helical membrane pass occupies residues 703–723 (GLSICAAIVAVSIAASTWLLC). Residues 724-728 (RSRAS) are interaction with the capsid protein. Over 724-756 (RSRASCLTPYRLTPNAKMPLCLAVLCCARSARA) the chain is Cytoplasmic. 3 S-palmitoyl cysteine; by host lipidation sites follow: C729, C749, and C750. A disulfide bridge links C729 with C750. The tract at residues 735-754 (LTPNAKMPLCLAVLCCARSA) is transient transmembrane before p62-6K protein processing. Residues 757 to 768 (ETTWESLDHLWN) are Extracellular-facing. The chain crosses the membrane as a helical span at residues 769–789 (NNQQMFWTQLLIPLAALIVVT). Residue R790 is a topological domain, cytoplasmic. A helical transmembrane segment spans residues 791–811 (LLKCMCCVVPFLVVAGAAGAG). At 812 to 1224 (AYEHATTMPN…SKTAWTWLTS (413 aa)) the chain is on the extracellular side. Intrachain disulfides connect C861/C926, C874/C906, C875/C908, and C880/C890. The interval 896 to 913 (VYPFMWGGAYCFCDTENT) is E1 fusion peptide loop. N-linked (GlcNAc...) asparagine; by host glycosylation is found at N946 and N1082. 4 disulfide bridges follow: C1071/C1083, C1113/C1188, C1118/C1192, and C1140/C1182. Residues 1225–1245 (LLGGSAVIIIIGLVLATLVAM) traverse the membrane as a helical segment. Residues 1246–1254 (YVLTNQKHN) lie on the Cytoplasmic side of the membrane.

Homodimer. Homomultimer. Interacts with host karyopherin KPNA4; this interaction allows the nuclear import of the viral capsid protein. Interacts with spike glycoprotein E2. Interacts with host IRAK1; the interaction leads to inhibition of IRAK1-dependent signaling. Part of a tetrameric complex composed of host CRM1, host importin alpha/beta dimer and the viral capsid; this complex blocks the receptor-mediated transport through the nuclear pore. Interacts with host phosphatase PPP1CA; this interaction dephosphorylates the capsid protein, which increases its ability to bind to the viral genome. In terms of assembly, the precursor of protein E3/E2 and E1 form a heterodimer shortly after synthesis. As to quaternary structure, interacts with spike glycoprotein E2. The precursor of protein E3/E2 and E1 form a heterodimer shortly after synthesis. Processing of the precursor of protein E3/E2 into E2 and E3 results in a heterodimer of the spike glycoproteins E2 and E1. Spike at virion surface are constituted of three E2-E1 heterodimers. After target cell attachment and endocytosis, E1 change conformation to form homotrimers. Interacts with 6K protein. Interacts with host LDLRAD3; this interaction mediates viral entry to the host cell. Interacts with spike glycoprotein E1. Processing of the precursor of protein E3/E2 into E2 and E3 results in a heterodimer of the spike glycoproteins E2 and E1. Spike at virion surface are constituted of a trimer of E2-E1 heterodimers. Interacts with 6K protein. Interacts with host LDLRAD3; this interaction mediates viral entry to the host cell. In terms of assembly, oligomer. Interacts with spike glycoprotein E1. Interacts with spike glycoprotein E2. In terms of processing, structural polyprotein: Specific enzymatic cleavages in vivo yield mature proteins. Capsid protein is auto-cleaved during polyprotein translation, unmasking a signal peptide at the N-terminus of the precursor of E3/E2. The remaining polyprotein is then targeted to the host endoplasmic reticulum, where host signal peptidase cleaves it into pE2, 6K and E1 proteins. pE2 is further processed to mature E3 and E2 by host furin in trans-Golgi vesicle. Phosphorylated on serine and threonine residues. Post-translationally, palmitoylated via thioester bonds. These palmitoylations may induce disruption of the C-terminus transmembrane. This would result in the reorientation of E2 C-terminus from lumenal to cytoplasmic side. In terms of processing, N-glycosylated. Palmitoylated via thioester bonds.

The protein localises to the virion. The protein resides in the host cytoplasm. Its subcellular location is the host cell membrane. It localises to the host nucleus. It is found in the virion membrane. The protein localises to the host Golgi apparatus. The protein resides in the host trans-Golgi network. Its subcellular location is the host endoplasmic reticulum. It catalyses the reaction Autocatalytic release of the core protein from the N-terminus of the togavirus structural polyprotein by hydrolysis of a -Trp-|-Ser- bond.. Its function is as follows. Forms an icosahedral capsid with a T=4 symmetry composed of 240 copies of the capsid protein surrounded by a lipid membrane through which penetrate 80 spikes composed of trimers of E1-E2 heterodimers. The capsid protein binds to the viral RNA genome at a site adjacent to a ribosome binding site for viral genome translation following genome release. Possesses a protease activity that results in its autocatalytic cleavage from the nascent structural protein. Following its self-cleavage, the capsid protein transiently associates with ribosomes, and within several minutes the protein binds to viral RNA and rapidly assembles into icosahedric core particles. The resulting nucleocapsid eventually associates with the cytoplasmic domain of the spike glycoprotein E2 at the cell membrane, leading to budding and formation of mature virions. In case of infection, new virions attach to target cells and after clathrin-mediated endocytosis their membrane fuses with the host endosomal membrane. This leads to the release of the nucleocapsid into the cytoplasm, followed by an uncoating event necessary for the genomic RNA to become accessible. The uncoating might be triggered by the interaction of capsid proteins with ribosomes. Binding of ribosomes would release the genomic RNA since the same region is genomic RNA-binding and ribosome-binding. Specifically inhibits interleukin-1 receptor-associated kinase 1/IRAK1-dependent signaling during viral entry, representing a means by which the alphaviruses may evade innate immune detection and activation prior to viral gene expression. Inhibits host transcription. Forms a tetrameric complex with XPO1/CRM1 and the nuclear import receptor importin. This complex blocks the central channel of host nuclear pores thereby inhibiting the receptor-mediated nuclear transport and thus the host mRNA and rRNA transcription. The inhibition of transcription is linked to a cytopathic effect on the host cell. Provides the signal sequence for the translocation of the precursor of protein E3/E2 to the host endoplasmic reticulum. Furin-cleaved E3 remains associated with spike glycoprotein E1 and mediates pH protection of the latter during the transport via the secretory pathway. After virion release from the host cell, the assembly protein E3 is gradually released in the extracellular space. In terms of biological role, plays a role in viral attachment to target host cell, by binding to the cell receptor LDLRAD3. Synthesized as a p62 precursor which is processed by furin at the cell membrane just before virion budding, giving rise to E2-E1 heterodimer. The p62-E1 heterodimer is stable, whereas E2-E1 is unstable and dissociate at low pH. p62 is processed at the last step, presumably to avoid E1 fusion activation before its final export to cell surface. E2 C-terminus contains a transitory transmembrane that would be disrupted by palmitoylation, resulting in reorientation of the C-terminal tail from lumenal to cytoplasmic side. This step is critical since E2 C-terminus is involved in budding by interacting with capsid proteins. This release of E2 C-terminus in cytoplasm occurs lately in protein export, and precludes premature assembly of particles at the endoplasmic reticulum membrane. Functionally, acts as a viroporin that participates in virus glycoprotein processing and transport to the plasma membrane, cell permeabilization and budding of viral particles. Disrupts the calcium homeostasis of the cell, probably at the endoplasmic reticulum level. This leads to cytoplasmic calcium elevation. Because of its lipophilic properties, the 6K protein is postulated to influence the selection of lipids that interact with the transmembrane domains of the glycoproteins, which, in turn, affects the deformability of the bilayer required for the extreme curvature that occurs as budding proceeds. Present in low amount in virions, about 3% compared to viral glycoproteins. Its function is as follows. Class II viral fusion protein. Fusion activity is inactive as long as E1 is bound to E2 in mature virion. After virus attachment to cell receptor LDLRAD3 and endocytosis, acidification of the endosome induce dissociation of E1/E2 heterodimer and concomitant trimerization of the E1 subunits. This E1 trimer is fusion active, and promotes release of viral nucleocapsid in cytoplasm after endosome and viral membrane fusion. Efficient fusion requires the presence of cholesterol and sphingolipid in the target membrane. The protein is Structural polyprotein of Venezuelan equine encephalitis virus (strain Everglades Fe3-7c) (VEEV).